A 255-amino-acid chain; its full sequence is Syntaxin-6 (255 aa).

Position 2 is an N-acetylserine (serine 2). Serine 2 is modified (phosphoserine). An interaction with BLTP3B region spans residues 2 to 112 (SMEDPFFVVK…KDQMSASSVQ (111 aa)). A required for interaction with VPS51 region spans residues 2-168 (SMEDPFFVVK…QAQQQLIVEQ (167 aa)). The Cytoplasmic segment spans residues 2–234 (SMEDPFFVVK…VSHMTSDRRQ (233 aa)). Positions 41–74 (EEIDWTTNELRNNLRSIEWDLEDLDETISIVEAN) form a coiled coil. 2 positions are modified to phosphoserine: serine 129 and serine 152. The region spanning 163 to 225 (QLIVEQQDEQ…DNVMKKLAKV (63 aa)) is the t-SNARE coiled-coil homology domain. Residues 235–255 (WCAIAILFAVLLVVLTLFLVL) traverse the membrane as a helical; Anchor for type IV membrane protein segment.

The protein belongs to the syntaxin family. In terms of assembly, identified in a complex containing STX6, STX12, VAMP4 and VTI1A. Binds EEA1. Interacts with VPS45A and GOPC. Interacts with MARCHF2; the interaction promotes MARCHF2-mediated ubiquitination and degradation of CFTR. Interacts with MARCHF3. Interacts with BLTP3B (via C-terminal coiled-coil domain). Interacts with BAIAP3; this interaction is increased in the presence of calcium. Interacts (via N-terminus) with VPS51. Interacts with VPS13B. As to expression, widely expressed, with relatively higher expression in brain, lung and kidney.

It localises to the golgi apparatus membrane. The protein resides in the golgi apparatus. The protein localises to the trans-Golgi network membrane. Its subcellular location is the recycling endosome membrane. In terms of biological role, SNARE promoting movement of transport vesicles to target membranes. Targets endosomes to the trans-Golgi network, and may therefore function in retrograde trafficking. Together with SNARE STX12, promotes movement of vesicles from endosomes to the cell membrane, and may therefore function in the endocytic recycling pathway. In Rattus norvegicus (Rat), this protein is Syntaxin-6 (Stx6).